Consider the following 504-residue polypeptide: D-alanine--D-alanyl carrier protein ligase (504 aa).

An ATP-binding site is contributed by 152–153 (TS). D197 is a D-alanine binding site. 292–297 (NTYGPT) contacts ATP. V301 contributes to the D-alanine binding site. Residues D383, 394–397 (YNGR), and K492 each bind ATP. K492 lines the D-alanine pocket.

Belongs to the ATP-dependent AMP-binding enzyme family. DltA subfamily.

Its subcellular location is the cytoplasm. The catalysed reaction is holo-[D-alanyl-carrier protein] + D-alanine + ATP = D-alanyl-[D-alanyl-carrier protein] + AMP + diphosphate. The protein operates within cell wall biogenesis; lipoteichoic acid biosynthesis. Catalyzes the first step in the D-alanylation of lipoteichoic acid (LTA), the activation of D-alanine and its transfer onto the D-alanyl carrier protein (Dcp) DltC. In an ATP-dependent two-step reaction, forms a high energy D-alanyl-AMP intermediate, followed by transfer of the D-alanyl residue as a thiol ester to the phosphopantheinyl prosthetic group of the Dcp. D-alanylation of LTA plays an important role in modulating the properties of the cell wall in Gram-positive bacteria, influencing the net charge of the cell wall. The chain is D-alanine--D-alanyl carrier protein ligase from Bacillus thuringiensis (strain Al Hakam).